Reading from the N-terminus, the 296-residue chain is ADP-forming sulfoacetate-CoA ligase subunit SqwL (296 aa).

Residues 17-20 (TGSE), lysine 43, and 96-98 (IAD) contribute to the CoA site. Residue histidine 251 is the Tele-phosphohistidine intermediate of the active site.

It belongs to the succinate/malate CoA ligase alpha subunit family. In terms of assembly, forms a complex with SqwK.

It catalyses the reaction sulfoacetate + ATP + CoA = sulfoacetyl-CoA + ADP + phosphate. Part of a variant of the sulfo-TK pathway, a D-sulfoquinovose degradation pathway that produces sulfoacetate. Hydrolyzes sulfoacetyl-coenzyme A (sulfoacetyl-CoA) to produce sulfoacetate and CoA coupled with the phosphorylation of ADP to generate ATP. Cannot use succinate, acetate or 3-hydroxypropionate, and shows only residual activities with malonate and 3-sulfopropanoate. The sequence is that of ADP-forming sulfoacetate-CoA ligase subunit SqwL from Acholeplasma sp.